Here is a 205-residue protein sequence, read N- to C-terminus: Dephospho-CoA kinase (205 aa).

One can recognise a DPCK domain in the interval 3–204 (KVGLTGGIGA…HRAHQPGESQ (202 aa)). 11-16 (GAGKSE) is an ATP binding site.

Belongs to the CoaE family.

It localises to the cytoplasm. The enzyme catalyses 3'-dephospho-CoA + ATP = ADP + CoA + H(+). Its pathway is cofactor biosynthesis; coenzyme A biosynthesis; CoA from (R)-pantothenate: step 5/5. Catalyzes the phosphorylation of the 3'-hydroxyl group of dephosphocoenzyme A to form coenzyme A. The sequence is that of Dephospho-CoA kinase from Streptomyces avermitilis (strain ATCC 31267 / DSM 46492 / JCM 5070 / NBRC 14893 / NCIMB 12804 / NRRL 8165 / MA-4680).